Reading from the N-terminus, the 233-residue chain is Orotidine 5'-phosphate decarboxylase (233 aa).

Residues D11, K34, 61–70, T117, R179, Q188, G208, and R209 each bind substrate; that span reads DLKLHDIPNT. Residue K63 is the Proton donor of the active site.

This sequence belongs to the OMP decarboxylase family. Type 1 subfamily. As to quaternary structure, homodimer.

The catalysed reaction is orotidine 5'-phosphate + H(+) = UMP + CO2. It participates in pyrimidine metabolism; UMP biosynthesis via de novo pathway; UMP from orotate: step 2/2. Functionally, catalyzes the decarboxylation of orotidine 5'-monophosphate (OMP) to uridine 5'-monophosphate (UMP). The polypeptide is Orotidine 5'-phosphate decarboxylase (Streptococcus pneumoniae (strain CGSP14)).